The sequence spans 1115 residues: Serine/threonine-protein kinase/endoribonuclease IRE1 (1115 aa).

A signal peptide spans 1–18; it reads MRLLRRNMLVLTLLVCVF. Residues 19 to 526 lie on the Lumenal side of the membrane; the sequence is SSIISCSIPL…RELDEKNQNS (508 aa). Residues N111, N213, N298, and N397 are each glycosylated (N-linked (GlcNAc...) asparagine). Residues 527–555 traverse the membrane as a helical segment; sequence LLLKFGSLVYRIIETGVFLLLFLIFCAIL. Topologically, residues 556–1115 are cytoplasmic; it reads QRFKILPPLY…DQILREFLYS (560 aa). The tract at residues 617–658 is disordered; that stretch reads GSLKSEKDNDDADEDDEKSLDLTTEKKKRKRGSRGGKKGRKS. Over residues 624-634 the composition is skewed to acidic residues; sequence DNDDADEDDEK. A compositionally biased stretch (basic residues) spans 642–658; the sequence is KKKRKRGSRGGKKGRKS. The 307-residue stretch at 674–980 folds into the Protein kinase domain; that stretch reads VVSEKILGYG…AMKVLRHPLF (307 aa). ADP contacts are provided by S684, K702, E746, C748, and N751. D797 (proton acceptor) is an active-site residue. Mg(2+) contacts are provided by N802 and D828. Phosphoserine; by autocatalysis is present on residues S840 and S841. T844 is modified (phosphothreonine; by autocatalysis). A KEN domain is found at 983-1115; it reads KSKKLEFLLK…DQILREFLYS (133 aa).

It belongs to the protein kinase superfamily. Ser/Thr protein kinase family. As to quaternary structure, homodimer; in response to the accumulation of unfolded proteins. Dimerization of lumenal domains help position the cytoplasmic kinase domains optimally for autophosphorylation to initiate the unfolded protein response. Dimerization of the kinase domain is important for ribonuclease activity. Interacts (when phosphorylated) with PTC2; the interaction is direct and serves to attenuate the endoplasmic reticulum unfolded protein response. Requires Mg(2+) as cofactor. In terms of processing, autophosphorylated mainly on serine residues; phosphorylation enables nucleotide binding by the active site.

Its subcellular location is the endoplasmic reticulum membrane. The enzyme catalyses L-seryl-[protein] + ATP = O-phospho-L-seryl-[protein] + ADP + H(+). The catalysed reaction is L-threonyl-[protein] + ATP = O-phospho-L-threonyl-[protein] + ADP + H(+). With respect to regulation, the kinase domain is activated by trans-autophosphorylation. Kinase activity is required for activation of the endoribonuclease domain. Inactivated by dephosphorylation via recruitment of PTC2. Senses unfolded proteins in the lumen of the endoplasmic reticulum via its N-terminal domain which leads to enzyme auto-activation. The active endoribonuclease domain splices HAC1 precursor mRNA to produce the mature form which then induces transcription of UPR target genes. The polypeptide is Serine/threonine-protein kinase/endoribonuclease IRE1 (IRE1) (Saccharomyces cerevisiae (strain ATCC 204508 / S288c) (Baker's yeast)).